The following is a 168-amino-acid chain: Peptide deformylase (168 aa).

Positions 92 and 134 each coordinate Fe cation. Residue Glu-135 is part of the active site. Residue His-138 participates in Fe cation binding.

It belongs to the polypeptide deformylase family. Requires Fe(2+) as cofactor.

It catalyses the reaction N-terminal N-formyl-L-methionyl-[peptide] + H2O = N-terminal L-methionyl-[peptide] + formate. Its function is as follows. Removes the formyl group from the N-terminal Met of newly synthesized proteins. Requires at least a dipeptide for an efficient rate of reaction. N-terminal L-methionine is a prerequisite for activity but the enzyme has broad specificity at other positions. The polypeptide is Peptide deformylase (Pseudomonas aeruginosa (strain ATCC 15692 / DSM 22644 / CIP 104116 / JCM 14847 / LMG 12228 / 1C / PRS 101 / PAO1)).